The primary structure comprises 261 residues: uncharacterized protein (261 aa).

An N-terminal signal peptide occupies residues 1–22 (MKYYGKCISYISILILTFFIGG). Cys23 carries N-palmitoyl cysteine lipidation. Cys23 is lipidated: S-diacylglycerol cysteine.

It belongs to the staphylococcal tandem lipoprotein family.

The protein localises to the cell membrane. This is an uncharacterized protein from Staphylococcus epidermidis (strain ATCC 12228 / FDA PCI 1200).